Reading from the N-terminus, the 688-residue chain is MARTSASHPATSAPAERAAWLRAELERANYAYYVLDQPDLPDAEYDKLFKELESIETEHPDLIVPDSPTQRVGGEAASGFEPVVHDQPMLSLNNGFADEDIVAFDKRVGDALGKNASEPPVPVDYAAELKFDGLAISLRYVDGAFVQASTRGDGTTGENVTENVRTIRSIPLKLKGKRVPHVLDVRGEVLMFKRDFERLNERQRAAEQKEFANPRNAAAGSLRQLDSKITAQRPLSFFAYGIGVLEGMEMPATHSELLDWYKELGLPVNSERAVVQGAEGLLGFFHGVGEKREKLPYDIDGVVYKVNRRDEQDALGFVSRAPRFALAHKFPAQEALTKLVAIDVQVGRTGAITPVARLEPVFVGGATVTNATLHNEDEVRRKDIRIGDTVIVRRAGDVIPEVVSALLDRRPSDAREFVMPTQCPVCGSSIERLPDEAIARCTGGLFCPAQRKQALWHFAQRRALDIDGLGEKIIDQLVEQNLVRTPADLFNIGFATLAELDRFAEKSAQNLLDSLEKAKHTTLARFIYALGIRHVGESTAKDLAKHFGSLDPIMDASVEALLEVNDVGPVVAESIHQFFAEEHNRTVIEQLRAPGKVTWPEGPPAPKAPQGVLAGKTVVLTGTLPSLAREEAKEMLEAAGAKVAGSVSKKTDYLVAGADAGSKLAKAEELGVPVLDEDGMRKLLEGQL.

NAD(+) is bound by residues 42-46 (DAEYD), 91-92 (SL), and Glu128. Residue Lys130 is the N6-AMP-lysine intermediate of the active site. NAD(+)-binding residues include Arg151, Glu188, Lys305, and Lys329. 4 residues coordinate Zn(2+): Cys423, Cys426, Cys441, and Cys447. In terms of domain architecture, BRCT spans 608–688 (APQGVLAGKT…GMRKLLEGQL (81 aa)).

It belongs to the NAD-dependent DNA ligase family. LigA subfamily. Mg(2+) is required as a cofactor. Mn(2+) serves as cofactor.

The enzyme catalyses NAD(+) + (deoxyribonucleotide)n-3'-hydroxyl + 5'-phospho-(deoxyribonucleotide)m = (deoxyribonucleotide)n+m + AMP + beta-nicotinamide D-nucleotide.. DNA ligase that catalyzes the formation of phosphodiester linkages between 5'-phosphoryl and 3'-hydroxyl groups in double-stranded DNA using NAD as a coenzyme and as the energy source for the reaction. It is essential for DNA replication and repair of damaged DNA. The protein is DNA ligase of Paraburkholderia phytofirmans (strain DSM 17436 / LMG 22146 / PsJN) (Burkholderia phytofirmans).